The sequence spans 131 residues: Cystatin J (131 aa).

The first 18 residues, 1–18 (MHLYLCVLVCLSIGMANC), serve as a signal peptide directing secretion. One can recognise a Cystatin domain in the interval 35-109 (DEILLTGVEF…RMNLPTKCSF (75 aa)). The Secondary area of contact signature appears at 68-72 (QVVAG). Intrachain disulfides connect cysteine 86/cysteine 97 and cysteine 107/cysteine 128.

It belongs to the cystatin family.

Its subcellular location is the secreted. The protein resides in the nematocyst. In terms of biological role, this recombinant protein inhibits the C1 cysteine protease papain (Ki is below 0.5 nM). The polypeptide is Cystatin J (Cyanea capillata (Lion's mane jellyfish)).